The sequence spans 658 residues: Threonine--tRNA ligase (658 aa).

A TGS domain is found at 1 to 61 (MSDVRVIIQR…KDGEEVEPVQ (61 aa)). A catalytic region spans residues 259-554 (DHRKLGNELD…LLEHYAGAFP (296 aa)). Residues cysteine 353, histidine 404, and histidine 531 each contribute to the Zn(2+) site.

This sequence belongs to the class-II aminoacyl-tRNA synthetase family. As to quaternary structure, homodimer. Zn(2+) serves as cofactor.

Its subcellular location is the cytoplasm. The enzyme catalyses tRNA(Thr) + L-threonine + ATP = L-threonyl-tRNA(Thr) + AMP + diphosphate + H(+). Its function is as follows. Catalyzes the attachment of threonine to tRNA(Thr) in a two-step reaction: L-threonine is first activated by ATP to form Thr-AMP and then transferred to the acceptor end of tRNA(Thr). Also edits incorrectly charged L-seryl-tRNA(Thr). The chain is Threonine--tRNA ligase from Streptomyces avermitilis (strain ATCC 31267 / DSM 46492 / JCM 5070 / NBRC 14893 / NCIMB 12804 / NRRL 8165 / MA-4680).